The sequence spans 449 residues: Delta(8)-fatty-acid desaturase 2 (449 aa).

The region spanning 7–91 (KRYVTSEDLK…VRDHHVSDVS (85 aa)) is the Cytochrome b5 heme-binding domain. Positions 42 and 65 each coordinate heme. A run of 2 helical transmembrane segments spans residues 113–133 (VTLY…YGVL) and 138–158 (IWAH…SAYV). The Histidine box-1 signature appears at 160–164 (HDSGH). A helical membrane pass occupies residues 176-196 (LIQLLSGNCLTGISIAWWKWT). A Histidine box-2 motif is present at residues 197-201 (HNAHH). 3 consecutive transmembrane segments (helical) span residues 255–275 (FYPV…LLLF), 284–304 (ALNI…VSFL), and 311–331 (FIFV…FCLN). A Histidine box-3 motif is present at residues 374–378 (QLEHH).

Belongs to the fatty acid desaturase type 1 family. Fe cation is required as a cofactor. In terms of tissue distribution, highly expressed in flowers and siliques. Expressed at low levels in roots, leaves and stems.

The protein localises to the endoplasmic reticulum membrane. It carries out the reaction an N-acyl-(4R)-4-hydroxysphinganine + 2 Fe(II)-[cytochrome b5] + O2 + 2 H(+) = a (4R,8E)-4-hydroxysphingenine ceramide + 2 Fe(III)-[cytochrome b5] + 2 H2O. The catalysed reaction is an N-acyl-(4R)-4-hydroxysphinganine + 2 Fe(II)-[cytochrome b5] + O2 + 2 H(+) = a (4R,8Z)-4-hydroxysphing-8-enine ceramide + 2 Fe(III)-[cytochrome b5] + 2 H2O. In terms of biological role, plays a major role as delta(8)-fatty-acid desaturase which introduces a double bond at the 8-position in the long-chain base (LCB) of ceramides with or without a hydroxy group at the 4-position. The enzyme produces both the 8E and 8Z isomers (in a 4:1 ratio). This structural modification contributes to the quantitative partitioning of ceramides between the two major sphingolipid classes, glucosylceramides and glycosylinositolphosphoryl ceramides. Sphingolipids are important membrane components involved in environmental stress responses, such as resistance to chilling, and act as cell signaling molecules. This Arabidopsis thaliana (Mouse-ear cress) protein is Delta(8)-fatty-acid desaturase 2 (SLD2).